The primary structure comprises 343 residues: Phosphate acyltransferase (343 aa).

It belongs to the PlsX family. In terms of assembly, homodimer. Probably interacts with PlsY.

It is found in the cytoplasm. The catalysed reaction is a fatty acyl-[ACP] + phosphate = an acyl phosphate + holo-[ACP]. It participates in lipid metabolism; phospholipid metabolism. In terms of biological role, catalyzes the reversible formation of acyl-phosphate (acyl-PO(4)) from acyl-[acyl-carrier-protein] (acyl-ACP). This enzyme utilizes acyl-ACP as fatty acyl donor, but not acyl-CoA. In Coxiella burnetii (strain RSA 331 / Henzerling II), this protein is Phosphate acyltransferase.